The primary structure comprises 162 residues: Regulatory protein RecX (162 aa).

This sequence belongs to the RecX family.

It is found in the cytoplasm. Modulates RecA activity. This chain is Regulatory protein RecX, found in Xanthomonas campestris pv. campestris (strain 8004).